The following is a 128-amino-acid chain: MRFAIVVTGPAYGTQQASSAFQFAQALIAEGHELSSVFFYREGVYNANQLTSPASDEFDLVRGWQQLNAQHGVALNICVAAALRRGIVDETEAGRLGLASSNLQPGFTLSGLGALAEASLTCDRVVQF.

Residue Cys-78 is the Cysteine persulfide intermediate of the active site.

This sequence belongs to the DsrE/TusD family. Heterohexamer, formed by a dimer of trimers. The hexameric TusBCD complex contains 2 copies each of TusB, TusC and TusD. The TusBCD complex interacts with TusE.

The protein resides in the cytoplasm. In terms of biological role, part of a sulfur-relay system required for 2-thiolation of 5-methylaminomethyl-2-thiouridine (mnm(5)s(2)U) at tRNA wobble positions. Accepts sulfur from TusA and transfers it in turn to TusE. The protein is Sulfurtransferase TusD of Escherichia coli (strain 55989 / EAEC).